The primary structure comprises 299 residues: Acetylglutamate kinase (299 aa).

Substrate-binding positions include 70–71, R92, and N186; that span reads GG.

This sequence belongs to the acetylglutamate kinase family. ArgB subfamily.

The protein resides in the cytoplasm. It catalyses the reaction N-acetyl-L-glutamate + ATP = N-acetyl-L-glutamyl 5-phosphate + ADP. It functions in the pathway amino-acid biosynthesis; L-arginine biosynthesis; N(2)-acetyl-L-ornithine from L-glutamate: step 2/4. Catalyzes the ATP-dependent phosphorylation of N-acetyl-L-glutamate. The chain is Acetylglutamate kinase from Caldanaerobacter subterraneus subsp. tengcongensis (strain DSM 15242 / JCM 11007 / NBRC 100824 / MB4) (Thermoanaerobacter tengcongensis).